A 246-amino-acid chain; its full sequence is Thaumatin-like protein 1 (246 aa).

Residues 1-24 (MMKSQAALLGLTTLAILFFSGAHA) form the signal peptide. 8 disulfide bridges follow: Cys33–Cys245, Cys81–Cys91, Cys96–Cys103, Cys151–Cys234, Cys156–Cys217, Cys164–Cys180, Cys184–Cys193, and Cys194–Cys204.

It belongs to the thaumatin family. As to expression, equally expressed in the abscission zone and surrounding tissues of both fruitlets and leaves.

It is found in the secreted. Functionally, may be involved in protecting plant tissues from pathogen infection. The chain is Thaumatin-like protein 1 from Prunus persica (Peach).